We begin with the raw amino-acid sequence, 302 residues long: Segregation and condensation protein A (302 aa).

The protein belongs to the ScpA family. Component of a cohesin-like complex composed of ScpA, ScpB and the Smc homodimer, in which ScpA and ScpB bind to the head domain of Smc. The presence of the three proteins is required for the association of the complex with DNA.

It localises to the cytoplasm. Its function is as follows. Participates in chromosomal partition during cell division. May act via the formation of a condensin-like complex containing Smc and ScpB that pull DNA away from mid-cell into both cell halves. The polypeptide is Segregation and condensation protein A (Xylella fastidiosa (strain 9a5c)).